We begin with the raw amino-acid sequence, 106 residues long: Large ribosomal subunit protein eL42 (106 aa).

4 residues coordinate Zn(2+): Cys12, Cys17, Cys74, and Cys77.

The protein belongs to the eukaryotic ribosomal protein eL42 family. As to quaternary structure, component of the large ribosomal subunit. Mature ribosomes consist of a small (40S) and a large (60S) subunit. The 40S subunit contains about 32 different proteins and 1 molecule of RNA (18S). The 60S subunit contains 45 different proteins and 3 molecules of RNA (25S, 5.8S and 5S). The cofactor is Zn(2+).

It is found in the cytoplasm. Its function is as follows. Component of the ribosome, a large ribonucleoprotein complex responsible for the synthesis of proteins in the cell. The small ribosomal subunit (SSU) binds messenger RNAs (mRNAs) and translates the encoded message by selecting cognate aminoacyl-transfer RNA (tRNA) molecules. The large subunit (LSU) contains the ribosomal catalytic site termed the peptidyl transferase center (PTC), which catalyzes the formation of peptide bonds, thereby polymerizing the amino acids delivered by tRNAs into a polypeptide chain. The nascent polypeptides leave the ribosome through a tunnel in the LSU and interact with protein factors that function in enzymatic processing, targeting, and the membrane insertion of nascent chains at the exit of the ribosomal tunnel. This Candida albicans (strain SC5314 / ATCC MYA-2876) (Yeast) protein is Large ribosomal subunit protein eL42 (RPL44).